We begin with the raw amino-acid sequence, 155 residues long: 6,7-dimethyl-8-ribityllumazine synthase (155 aa).

Residues Phe24, 58–60, and 82–84 contribute to the 5-amino-6-(D-ribitylamino)uracil site; these read AFE and AII. A (2S)-2-hydroxy-3-oxobutyl phosphate-binding site is contributed by 87 to 88; that stretch reads ST. His90 acts as the Proton donor in catalysis. A 5-amino-6-(D-ribitylamino)uracil-binding site is contributed by Phe115. Residue Arg129 participates in (2S)-2-hydroxy-3-oxobutyl phosphate binding.

Belongs to the DMRL synthase family.

It carries out the reaction (2S)-2-hydroxy-3-oxobutyl phosphate + 5-amino-6-(D-ribitylamino)uracil = 6,7-dimethyl-8-(1-D-ribityl)lumazine + phosphate + 2 H2O + H(+). The protein operates within cofactor biosynthesis; riboflavin biosynthesis; riboflavin from 2-hydroxy-3-oxobutyl phosphate and 5-amino-6-(D-ribitylamino)uracil: step 1/2. Its function is as follows. Catalyzes the formation of 6,7-dimethyl-8-ribityllumazine by condensation of 5-amino-6-(D-ribitylamino)uracil with 3,4-dihydroxy-2-butanone 4-phosphate. This is the penultimate step in the biosynthesis of riboflavin. The chain is 6,7-dimethyl-8-ribityllumazine synthase from Chlorobium phaeovibrioides (strain DSM 265 / 1930) (Prosthecochloris vibrioformis (strain DSM 265)).